The primary structure comprises 253 residues: Triosephosphate isomerase (253 aa).

Residue 8–10 (NWK) participates in substrate binding. Histidine 93 serves as the catalytic Electrophile. Glutamate 165 acts as the Proton acceptor in catalysis. Residues glycine 171, serine 210, and 231-232 (GG) contribute to the substrate site.

Belongs to the triosephosphate isomerase family. In terms of assembly, homodimer.

It localises to the cytoplasm. The enzyme catalyses D-glyceraldehyde 3-phosphate = dihydroxyacetone phosphate. Its pathway is carbohydrate biosynthesis; gluconeogenesis. It functions in the pathway carbohydrate degradation; glycolysis; D-glyceraldehyde 3-phosphate from glycerone phosphate: step 1/1. Functionally, involved in the gluconeogenesis. Catalyzes stereospecifically the conversion of dihydroxyacetone phosphate (DHAP) to D-glyceraldehyde-3-phosphate (G3P). The protein is Triosephosphate isomerase of Francisella tularensis subsp. holarctica (strain FTNF002-00 / FTA).